Reading from the N-terminus, the 229-residue chain is 5'-methylthioadenosine/S-adenosylhomocysteine nucleosidase (229 aa).

The active-site Proton acceptor is Glu12. Residues Gly78, Ile152, and 173 to 174 (ME) contribute to the substrate site. Asp197 functions as the Proton donor in the catalytic mechanism.

Belongs to the PNP/UDP phosphorylase family. MtnN subfamily.

The catalysed reaction is S-adenosyl-L-homocysteine + H2O = S-(5-deoxy-D-ribos-5-yl)-L-homocysteine + adenine. The enzyme catalyses S-methyl-5'-thioadenosine + H2O = 5-(methylsulfanyl)-D-ribose + adenine. It carries out the reaction 5'-deoxyadenosine + H2O = 5-deoxy-D-ribose + adenine. It participates in amino-acid biosynthesis; L-methionine biosynthesis via salvage pathway; S-methyl-5-thio-alpha-D-ribose 1-phosphate from S-methyl-5'-thioadenosine (hydrolase route): step 1/2. Catalyzes the irreversible cleavage of the glycosidic bond in both 5'-methylthioadenosine (MTA) and S-adenosylhomocysteine (SAH/AdoHcy) to adenine and the corresponding thioribose, 5'-methylthioribose and S-ribosylhomocysteine, respectively. Also cleaves 5'-deoxyadenosine, a toxic by-product of radical S-adenosylmethionine (SAM) enzymes, into 5-deoxyribose and adenine. The sequence is that of 5'-methylthioadenosine/S-adenosylhomocysteine nucleosidase from Haemophilus influenzae (strain PittEE).